We begin with the raw amino-acid sequence, 210 residues long: Small ribosomal subunit protein eS8y (210 aa).

Residues 1–22 (MGISRDSIHKRRATGGKQKMWR) are disordered. Basic residues predominate over residues 8–22 (IHKRRATGGKQKMWR).

This sequence belongs to the eukaryotic ribosomal protein eS8 family.

In Arabidopsis thaliana (Mouse-ear cress), this protein is Small ribosomal subunit protein eS8y (RPS8B).